Reading from the N-terminus, the 1342-residue chain is MVYSYTEKKRIRKDFGKRPQVLDVPYLLSIQLDSFQKFIEQDPEGQYGLEAAFRSVFPIQSYSGNSELQYVSYRLGEPVFDVQECQIRGVTYSAPLRVKLRLVIYEREAPEGTVKDIKEQEVYMGEIPLMTDNGTFVINGTERVIVSQLHRSPGVFFDSDKGKTHSSGKVLYNARIIPYRGSWLDFEFDPKDNLFVRIDRRRKLPATIILRALNYTTEQILDLFFEKVIFEIRDNKLQMELVPERLRGETASFDIEANGKVYVEKGRRITARHIRQLEKDDVKLIEVPVEYIAGKVVAKDYIDESTGELICAANMELSLDLLAKLSQSGHKRIETLFTNDLDHGPYISETLRVDPTNDRLSALVEIYRMMRPGEPPTREAAESLFENLFFSEDRYDLSAVGRMKFNRSLLRDEIEGSGILSKDDIIDVMKKLIDIRNGKGEVDDIDHLGNRRIRSVGEMAENQFRVGLVRVERAVKERLSLGDLDTLMPQDMINAKPISAAVKEFFGSSQLSQFMDQNNPLSEITHKRRISALGPGGLTRERAGFEVRDVHPTHYGRVCPIETPEGPNIGLINSLSVYAQTNEYGFLETPYRKVIDGVVTDEIHYLSAIEEGNYVIAQANSNLDEEGHFVEDLVTCRSKGESSLFSRDQVDYMDVSTQQVVSVGASLIPFLEHDDANRALMGANMQRQAVPTLRADKPLVGTGMERAVAVDSGVTAVAKRGGVVQYVDASRIVIKVNEDEMYPGEAGIDIYNLTKYTRSNQNTCINQMPCVSLGEPVERGDVLADGPSTDLGELALGQNMRVAFMPWNGYNFEDSILVSERVVQEDRFTTIHIQELACVSRDTKLGPEEITADIPNVGEAALSKLDESGIVYIGAEVTGGDILVGKVTPKGETQLTPEEKLLRAIFGEKASDVKDSSLRVPNGVSGTVIDVQVFTRDGVEKDKRALEIEEMQLKQAKKDLSEELQILEAGLFSRIRAVLVAGGVEAEKLDKLPRDRWLELGLTDEEKQNQLEQLAEQYDELKHEFEKKLEAKRRKITQGDDLAPGVLKIVKVYLAVKRRIQPGDKMAGRHGNKGVISKINPIEDMPYDENGTPVDIVLNPLGVPSRMNIGQILETHLGMAAKGIGDKINAMLKQQQEVAKLREFIQRAYDLGADVRQKVDLSTFSDEEVMRLAENLRKGMPIATPVFDGAKEAEIKELLKLGDLPTSGQIRLYDGRTGEQFERPVTVGYMYMLKLNHLVDDKMHARSTGSYSLVTQQPLGGKAQFGGQRFGEMEVWALEAYGAAYTLQEMLTVKSDDVNGRTKMYKNIVDGNHQMEPGMPESFNVLLKEIRSLGINIELEDE.

An N6-acetyllysine mark is found at K1022 and K1200.

It belongs to the RNA polymerase beta chain family. In terms of assembly, the RNAP catalytic core consists of 2 alpha, 1 beta, 1 beta' and 1 omega subunit. When a sigma factor is associated with the core the holoenzyme is formed, which can initiate transcription.

It catalyses the reaction RNA(n) + a ribonucleoside 5'-triphosphate = RNA(n+1) + diphosphate. DNA-dependent RNA polymerase catalyzes the transcription of DNA into RNA using the four ribonucleoside triphosphates as substrates. This is DNA-directed RNA polymerase subunit beta from Escherichia fergusonii (strain ATCC 35469 / DSM 13698 / CCUG 18766 / IAM 14443 / JCM 21226 / LMG 7866 / NBRC 102419 / NCTC 12128 / CDC 0568-73).